The primary structure comprises 212 residues: Proteasome subunit beta 2 (212 aa).

Residues 1 to 13 (MSVDEKVARALKG) constitute a propeptide, removed in mature form; by autocatalysis. Thr-14 (nucleophile) is an active-site residue.

This sequence belongs to the peptidase T1B family. In terms of assembly, the 20S proteasome core is composed of 14 alpha and 14 beta subunits that assemble into four stacked heptameric rings, resulting in a barrel-shaped structure. The two inner rings, each composed of seven catalytic beta subunits, are sandwiched by two outer rings, each composed of seven alpha subunits. The catalytic chamber with the active sites is on the inside of the barrel. Has a gated structure, the ends of the cylinder being occluded by the N-termini of the alpha-subunits. Is capped at one or both ends by the proteasome regulatory ATPase, PAN.

Its subcellular location is the cytoplasm. It catalyses the reaction Cleavage of peptide bonds with very broad specificity.. The formation of the proteasomal ATPase PAN-20S proteasome complex, via the docking of the C-termini of PAN into the intersubunit pockets in the alpha-rings, triggers opening of the gate for substrate entry. Interconversion between the open-gate and close-gate conformations leads to a dynamic regulation of the 20S proteasome proteolysis activity. Component of the proteasome core, a large protease complex with broad specificity involved in protein degradation. The polypeptide is Proteasome subunit beta 2 (Ignicoccus hospitalis (strain KIN4/I / DSM 18386 / JCM 14125)).